The primary structure comprises 91 residues: Putative pterin-4-alpha-carbinolamine dehydratase (91 aa).

Belongs to the pterin-4-alpha-carbinolamine dehydratase family.

It carries out the reaction (4aS,6R)-4a-hydroxy-L-erythro-5,6,7,8-tetrahydrobiopterin = (6R)-L-erythro-6,7-dihydrobiopterin + H2O. The sequence is that of Putative pterin-4-alpha-carbinolamine dehydratase from Halobacterium salinarum (strain ATCC 29341 / DSM 671 / R1).